Reading from the N-terminus, the 157-residue chain is uncharacterized protein (157 aa).

The first 19 residues, 1–19 (MRKYLIILVLLLFLSSSFG), serve as a signal peptide directing secretion.

This is an uncharacterized protein from Methanocaldococcus jannaschii (strain ATCC 43067 / DSM 2661 / JAL-1 / JCM 10045 / NBRC 100440) (Methanococcus jannaschii).